The sequence spans 159 residues: S-ribosylhomocysteine lyase 1 (159 aa).

Residues His54, His58, and Cys124 each coordinate Fe cation.

Belongs to the LuxS family. In terms of assembly, homodimer. Requires Fe cation as cofactor.

The enzyme catalyses S-(5-deoxy-D-ribos-5-yl)-L-homocysteine = (S)-4,5-dihydroxypentane-2,3-dione + L-homocysteine. Its function is as follows. Involved in the synthesis of autoinducer 2 (AI-2) which is secreted by bacteria and is used to communicate both the cell density and the metabolic potential of the environment. The regulation of gene expression in response to changes in cell density is called quorum sensing. Catalyzes the transformation of S-ribosylhomocysteine (RHC) to homocysteine (HC) and 4,5-dihydroxy-2,3-pentadione (DPD). The chain is S-ribosylhomocysteine lyase 1 from Lactobacillus delbrueckii subsp. bulgaricus (strain ATCC BAA-365 / Lb-18).